A 334-amino-acid chain; its full sequence is tRNA U34 carboxymethyltransferase (334 aa).

Carboxy-S-adenosyl-L-methionine-binding positions include lysine 91, tryptophan 105, lysine 110, glycine 130, 152-154, 181-182, methionine 196, tyrosine 200, and arginine 315; these read DPT and IE.

The protein belongs to the class I-like SAM-binding methyltransferase superfamily. CmoB family. In terms of assembly, homotetramer.

The enzyme catalyses carboxy-S-adenosyl-L-methionine + 5-hydroxyuridine(34) in tRNA = 5-carboxymethoxyuridine(34) in tRNA + S-adenosyl-L-homocysteine + H(+). Functionally, catalyzes carboxymethyl transfer from carboxy-S-adenosyl-L-methionine (Cx-SAM) to 5-hydroxyuridine (ho5U) to form 5-carboxymethoxyuridine (cmo5U) at position 34 in tRNAs. This Klebsiella pneumoniae subsp. pneumoniae (strain ATCC 700721 / MGH 78578) protein is tRNA U34 carboxymethyltransferase.